The primary structure comprises 339 residues: Uroporphyrinogen decarboxylase (339 aa).

Substrate contacts are provided by residues 21-25 (RQAGR), Asp-71, Tyr-147, Ser-202, and His-315.

The protein belongs to the uroporphyrinogen decarboxylase family. As to quaternary structure, homodimer.

It is found in the cytoplasm. It catalyses the reaction uroporphyrinogen III + 4 H(+) = coproporphyrinogen III + 4 CO2. It functions in the pathway porphyrin-containing compound metabolism; protoporphyrin-IX biosynthesis; coproporphyrinogen-III from 5-aminolevulinate: step 4/4. In terms of biological role, catalyzes the decarboxylation of four acetate groups of uroporphyrinogen-III to yield coproporphyrinogen-III. This chain is Uroporphyrinogen decarboxylase, found in Helicobacter pylori (strain G27).